The chain runs to 596 residues: Inactive metallocarboxypeptidase ECM14 (596 aa).

A signal peptide spans 1–22 (MHFSVRLSLFLTLASSLPLVSA). A propeptide spanning residues 23-184 (VPQHEDQAYT…QTIYESYPKA (162 aa)) is cleaved from the precursor. The disordered stretch occupies residues 182–211 (PKAGSASPSQQGPTTRRFSPSASTSKSKPH). Over residues 187-207 (ASPSQQGPTTRRFSPSASTSK) the composition is skewed to polar residues. One can recognise a Peptidase M14 domain in the interval 220–546 (DYQPLSVLLP…RAMVAMGKFL (327 aa)). Histidine 285 and glutamate 288 together coordinate Zn(2+). Substrate is bound by residues 285-288 (HARE), arginine 343, and 360-361 (DH). An intrachain disulfide couples cysteine 354 to cysteine 377. Asparagine 370 carries N-linked (GlcNAc...) asparagine glycosylation. Zn(2+) is bound at residue histidine 417. 418-419 (SY) contacts substrate. The disordered stretch occupies residues 557 to 596 (DGLRASEEPQDYDNDLEDGEDDKDEQGSTVFRAQADDLQS). Positions 564–580 (EPQDYDNDLEDGEDDKD) are enriched in acidic residues. Over residues 583 to 596 (GSTVFRAQADDLQS) the composition is skewed to polar residues.

It belongs to the peptidase M14 family. Zn(2+) is required as a cofactor.

It localises to the vacuole. The protein localises to the secreted. Inactive carboxypeptidase that may play a role in cell wall organization and biogenesis. The polypeptide is Inactive metallocarboxypeptidase ECM14 (ECM14) (Arthroderma benhamiae (strain ATCC MYA-4681 / CBS 112371) (Trichophyton mentagrophytes)).